The sequence spans 189 residues: Peptidyl-tRNA hydrolase (189 aa).

TRNA is bound at residue Tyr15. His20 serves as the catalytic Proton acceptor. The tRNA site is built by Tyr65, Asn67, and Asn113.

This sequence belongs to the PTH family. Monomer.

The protein localises to the cytoplasm. The enzyme catalyses an N-acyl-L-alpha-aminoacyl-tRNA + H2O = an N-acyl-L-amino acid + a tRNA + H(+). Its function is as follows. Hydrolyzes ribosome-free peptidyl-tRNAs (with 1 or more amino acids incorporated), which drop off the ribosome during protein synthesis, or as a result of ribosome stalling. Functionally, catalyzes the release of premature peptidyl moieties from peptidyl-tRNA molecules trapped in stalled 50S ribosomal subunits, and thus maintains levels of free tRNAs and 50S ribosomes. The polypeptide is Peptidyl-tRNA hydrolase (Caldicellulosiruptor saccharolyticus (strain ATCC 43494 / DSM 8903 / Tp8T 6331)).